We begin with the raw amino-acid sequence, 420 residues long: Glutamate dehydrogenase (420 aa).

Residue K105 is part of the active site. NAD(+) is bound at residue 220-226; it reads GYGNAGY.

Belongs to the Glu/Leu/Phe/Val dehydrogenases family. Homohexamer.

It localises to the cytoplasm. The enzyme catalyses L-glutamate + NAD(+) + H2O = 2-oxoglutarate + NH4(+) + NADH + H(+). The catalysed reaction is L-glutamate + NADP(+) + H2O = 2-oxoglutarate + NH4(+) + NADPH + H(+). The sequence is that of Glutamate dehydrogenase (gdhA) from Pyrococcus abyssi (strain GE5 / Orsay).